The chain runs to 465 residues: Lipase 10 (465 aa).

Positions 1-16 are cleaved as a signal peptide; that stretch reads MKTLLIFLAFLSSIFA. Residues Cys112 and Cys285 are joined by a disulfide bond. Residue Ser196 is the Charge relay system of the active site. 2 N-linked (GlcNAc...) asparagine glycosylation sites follow: Asn231 and Asn319. Catalysis depends on charge relay system residues Asp348 and His381. Cys364 and Cys409 are disulfide-bonded.

It belongs to the AB hydrolase superfamily. Lipase family. Class Lip subfamily.

The protein resides in the secreted. The enzyme catalyses a triacylglycerol + H2O = a diacylglycerol + a fatty acid + H(+). In terms of biological role, secreted lipase that is able to hydrolyze both the neutral triacylglycerols and the monopalmitate ester Tween 40, allowing the use of hydrolyzed products as carbon sources. Has broad lipolytic activity, which may be important for colonization and subsequent infection, therefore contributing to the persistence and virulence in human tissue. This Candida albicans (strain SC5314 / ATCC MYA-2876) (Yeast) protein is Lipase 10.